Here is a 213-residue protein sequence, read N- to C-terminus: Putative nascent polypeptide-associated complex subunit alpha-like protein (213 aa).

Residues 1 to 46 (MPGEATETVPAIEQQLLQPQAETGSGTESDSDESVPELEEQDSTQV) form a disordered region. Residues 15-28 (QLLQPQAETGSGTE) are compositionally biased toward polar residues. A compositionally biased stretch (acidic residues) spans 29-42 (SDSDESVPELEEQD). 2 positions are modified to phosphoserine: S43 and S131. The NAC-A/B domain occupies 69 to 134 (RRSEKKARKA…AKIEDLSQEA (66 aa)). N6-acetyllysine; alternate is present on K141. Residue K141 forms a Glycyl lysine isopeptide (Lys-Gly) (interchain with G-Cter in SUMO2); alternate linkage. Phosphothreonine is present on T160. Phosphoserine occurs at positions 165, 185, and 201. A UBA domain is found at 175–211 (VEIKDIELVLSQANVWGAKAVRALKNSNDIVNAIMEL). T212 is modified (phosphothreonine).

It belongs to the NAC-alpha family.

The protein is Putative nascent polypeptide-associated complex subunit alpha-like protein of Homo sapiens (Human).